The sequence spans 333 residues: Electron transfer flavoprotein subunit alpha, mitochondrial (333 aa).

The N-terminal 19 residues, 1 to 19 (MFRAAAPGQLRRAASLLRF), are a transit peptide targeting the mitochondrion. The segment at 20–204 (QSTLVIAEHA…GISEWLDQKL (185 aa)) is domain I. An N6-acetyllysine; alternate modification is found at Lys59. Position 59 is an N6-succinyllysine; alternate (Lys59). Lys62 is subject to N6-acetyllysine. N6-acetyllysine; alternate is present on Lys69. Position 69 is an N6-succinyllysine; alternate (Lys69). Lys75 carries the N6-acetyllysine modification. The residue at position 85 (Lys85) is an N6-acetyllysine; alternate. Lys85 bears the N6-succinyllysine; alternate mark. Residue Thr93 is modified to Phosphothreonine. Lys101 and Lys139 each carry N6-acetyllysine. Ser140 is modified (phosphoserine). Lys158 carries the post-translational modification N6-acetyllysine; alternate. Lys158 bears the N6-succinyllysine; alternate mark. Lys164 is subject to N6-acetyllysine. The residue at position 187 (Lys187) is an N6-succinyllysine. Position 203 is an N6-acetyllysine; alternate (Lys203). N6-succinyllysine; alternate is present on Lys203. The interval 205 to 333 (TKSDRPELTG…PEMTEILKKK (129 aa)) is domain II. The residue at position 216 (Lys216) is an N6-succinyllysine. Arg223 contacts FAD. N6-acetyllysine; alternate occurs at positions 226 and 232. Residues Lys226 and Lys232 each carry the N6-succinyllysine; alternate modification. FAD-binding positions include Ser248, 263-266 (VGQT), 281-286 (SGAIQH), and Asn300. Residue Lys301 is modified to N6-succinyllysine. Position 318–319 (318–319 (DL)) interacts with FAD.

The protein belongs to the ETF alpha-subunit/FixB family. Heterodimer composed of ETFA and ETFB. Identified in a complex that contains ETFA, ETFB and ETFRF1. Interaction with ETFRF1 promotes dissociation of the bound FAD and loss of electron transfer activity. Interacts with TASOR. FAD serves as cofactor.

It localises to the mitochondrion matrix. Its function is as follows. Heterodimeric electron transfer flavoprotein that accepts electrons from several mitochondrial dehydrogenases, including acyl-CoA dehydrogenases, glutaryl-CoA and sarcosine dehydrogenase. It transfers the electrons to the main mitochondrial respiratory chain via ETF-ubiquinone oxidoreductase (ETF dehydrogenase). Required for normal mitochondrial fatty acid oxidation and normal amino acid metabolism. The polypeptide is Electron transfer flavoprotein subunit alpha, mitochondrial (Etfa) (Rattus norvegicus (Rat)).